A 70-amino-acid polypeptide reads, in one-letter code: uncharacterized protein (70 aa).

This is an uncharacterized protein from Saccharomyces cerevisiae (strain ATCC 204508 / S288c) (Baker's yeast).